We begin with the raw amino-acid sequence, 280 residues long: uncharacterized protein (280 aa).

A run of 3 helical transmembrane segments spans residues 10 to 29 (IQQNGILTAVITGIVALLFN), 164 to 186 (FVFVRWFKETLAFFVGASAFAFI), and 209 to 228 (IFGLSCSALYIFWIIHYFLL).

Its subcellular location is the cell membrane. This is an uncharacterized protein from Bacillus subtilis (strain 168).